The chain runs to 216 residues: Phosphoenolpyruvate guanylyltransferase (216 aa).

3 residues coordinate phosphoenolpyruvate: Thr-139, Gly-155, and Ser-158.

This sequence belongs to the CofC family.

It catalyses the reaction phosphoenolpyruvate + GTP + H(+) = enolpyruvoyl-2-diphospho-5'-guanosine + diphosphate. It functions in the pathway cofactor biosynthesis; coenzyme F420 biosynthesis. Guanylyltransferase that catalyzes the activation of phosphoenolpyruvate (PEP) as enolpyruvoyl-2-diphospho-5'-guanosine, via the condensation of PEP with GTP. It is involved in the biosynthesis of coenzyme F420, a hydride carrier cofactor. The chain is Phosphoenolpyruvate guanylyltransferase from Streptomyces avermitilis (strain ATCC 31267 / DSM 46492 / JCM 5070 / NBRC 14893 / NCIMB 12804 / NRRL 8165 / MA-4680).